A 149-amino-acid polypeptide reads, in one-letter code: Large ribosomal subunit protein uL15 (149 aa).

Positions 1–64 are disordered; that stretch reads MVELHDLQPH…GQTPLYMRIP (64 aa). Basic residues predominate over residues 31 to 40; it reads TAGRGHKGQK.

Belongs to the universal ribosomal protein uL15 family. Part of the 50S ribosomal subunit.

Binds to the 23S rRNA. This is Large ribosomal subunit protein uL15 from Aquifex aeolicus (strain VF5).